The primary structure comprises 373 residues: P2Y purinoceptor 1 (373 aa).

Over 1-51 the chain is Extracellular; sequence MTEVLWPAVPNGTDAAFLAGPGSSWGNSTVASTAAVSSSFKCALTKTGFQF. 2 N-linked (GlcNAc...) asparagine glycosylation sites follow: Asn11 and Asn27. 2 disulfide bridges follow: Cys42/Cys296 and Cys124/Cys202. Residue Lys46 participates in ADP binding. A helical transmembrane segment spans residues 52 to 74; sequence YYLPAVYILVFIIGFLGNSVAIW. Residues 75–87 are Cytoplasmic-facing; sequence MFVFHMKPWSGIS. Residues 88–109 traverse the membrane as a helical segment; it reads VYMFNLALADFLYVLTLPALIF. Topologically, residues 110–125 are extracellular; sequence YYFNKTDWIFGDAMCK. N-linked (GlcNAc...) asparagine glycosylation is present at Asn113. A helical transmembrane segment spans residues 126–147; sequence LQRFIFHVNLYGSILFLTCISA. The Cytoplasmic segment spans residues 148-166; sequence HRYSGVVYPLKSLGRLKKK. The helical transmembrane segment at 167–188 threads the bilayer; that stretch reads NAICISVLVWLIVVVAISPILF. Topologically, residues 189–214 are extracellular; it reads YSGTGVRKNKTITCYDTTSDEYLRSY. Asn197 carries N-linked (GlcNAc...) asparagine glycosylation. Residue 203–205 participates in ADP binding; it reads YDT. The chain crosses the membrane as a helical span at residues 215–237; it reads FIYSMCTTVAMFCVPLVLILGCY. The Cytoplasmic segment spans residues 238 to 260; that stretch reads GLIVRALIYKDLDNSPLRRKSIY. A helical membrane pass occupies residues 261–284; that stretch reads LVIIVLTVFAVSYIPFHVMKTMNL. Residues 283–287, 303–306, and Arg310 contribute to the ADP site; these read NLRAR and YATY. At 285 to 303 the chain is on the extracellular side; sequence RARLDFQTPAMCAFNDRVY. Residues 304 to 325 traverse the membrane as a helical segment; sequence ATYQVTRGLASLNSCVDPILYF. Residues 326-373 lie on the Cytoplasmic side of the membrane; that stretch reads LAGDTFRRRLSRATRKASRRSEANLQSKSEDMTLNILPEFKQNGDTSL.

This sequence belongs to the G-protein coupled receptor 1 family.

The protein localises to the cell membrane. ATP functions as antagonist and inhibits ADP-induced mobilization of Ca(2+). The P2Y1 receptor-specific antagonists A3P5PS, A3P5P and A2P5P inhibit downstream signaling mediated by mobilization of Ca(2+) from intracellular stores, and platelet shape changes in response to extracellular ADP. Its function is as follows. Receptor for extracellular adenine nucleotides such as ADP. In platelets, binding to ADP leads to mobilization of intracellular calcium ions via activation of phospholipase C, a change in platelet shape, and ultimately platelet aggregation. This chain is P2Y purinoceptor 1 (P2RY1), found in Homo sapiens (Human).